Reading from the N-terminus, the 412-residue chain is Poly-beta-1,6-N-acetyl-D-glucosamine synthase (412 aa).

4 helical membrane-spanning segments follow: residues 7 to 28 (LLFYPIFMSIYWIVGSIYYFFI), 298 to 320 (IASITWVYIVICYLSFLVITANI), 332 to 354 (IFFFSSFTMTFINIIQFTVALFI), and 364 to 386 (VGLIFLSWYPTLYWVINAAVVIM).

The protein belongs to the glycosyltransferase 2 family.

The protein resides in the cell membrane. Functionally, N-acetylglucosaminyltransferase that catalyzes the polymerization of single monomer units of UDP-N-acetylglucosamine to produce the linear homomer poly-beta-1,6-N-acetyl-D-glucosamine (PNAG, also referred to as PIA), a biofilm adhesin polysaccharide. Requires IcaD for full activity. This Staphylococcus epidermidis protein is Poly-beta-1,6-N-acetyl-D-glucosamine synthase (icaA).